Reading from the N-terminus, the 231-residue chain is Sugar fermentation stimulation protein homolog (231 aa).

Belongs to the SfsA family.

The polypeptide is Sugar fermentation stimulation protein homolog (Syntrophotalea carbinolica (strain DSM 2380 / NBRC 103641 / GraBd1) (Pelobacter carbinolicus)).